The sequence spans 107 residues: uncharacterized protein (107 aa).

Residues 13–33 form a helical membrane-spanning segment; the sequence is VLIVTFLSSFIFIVWLPVALV.

It localises to the membrane. This is an uncharacterized protein from Saccharomyces cerevisiae (strain ATCC 204508 / S288c) (Baker's yeast).